The primary structure comprises 146 residues: Small ribosomal subunit protein uS13 (146 aa).

The disordered stretch occupies residues 119-146; the sequence is ARGKKVRGQRTRSTGRKGRTVGVVRRKR.

It belongs to the universal ribosomal protein uS13 family. In terms of assembly, part of the 30S ribosomal subunit. Forms a loose heterodimer with protein S19. Forms two bridges to the 50S subunit in the 70S ribosome.

In terms of biological role, located at the top of the head of the 30S subunit, it contacts several helices of the 16S rRNA. In the 70S ribosome it contacts the 23S rRNA (bridge B1a) and protein L5 of the 50S subunit (bridge B1b), connecting the 2 subunits; these bridges are implicated in subunit movement. In Archaeoglobus fulgidus (strain ATCC 49558 / DSM 4304 / JCM 9628 / NBRC 100126 / VC-16), this protein is Small ribosomal subunit protein uS13.